The chain runs to 415 residues: Multidrug resistance protein MdtA (415 aa).

Residues 1-21 (MKGSYKSRWVIVIVVVIAAIA) form the signal peptide. Residues 31–47 (DSQSAAPGATKQAQQSP) are compositionally biased toward polar residues. Disordered regions lie at residues 31-60 (DSQS…GPLA) and 392-415 (EAQS…GARS). Over residues 399–415 (PEEKATSREYAKKGARS) the composition is skewed to basic and acidic residues.

It belongs to the membrane fusion protein (MFP) (TC 8.A.1) family. As to quaternary structure, part of a tripartite efflux system composed of MdtA, MdtB and MdtC.

It localises to the cell inner membrane. In terms of biological role, the MdtABC tripartite complex confers resistance against novobiocin and deoxycholate. The protein is Multidrug resistance protein MdtA of Escherichia coli O157:H7.